The chain runs to 20 residues: MKADIHPNYVEIDATXSXGN.

Residues X16 and X18 each contribute to the Zn(2+) site.

This sequence belongs to the bacterial ribosomal protein bL31 family. Type A subfamily. As to quaternary structure, part of the 50S ribosomal subunit. The cofactor is Zn(2+).

In terms of biological role, binds the 23S rRNA. In Ectopseudomonas mendocina (Pseudomonas mendocina), this protein is Large ribosomal subunit protein bL31 (rpmE).